We begin with the raw amino-acid sequence, 329 residues long: Ficolin-2 (329 aa).

The first 29 residues, 1–29 (MELGGAAGALGPSGPLLVCLCFGTLAAQA), serve as a signal peptide directing secretion. Residues 52-111 (GCPGLPGAPGLKGETGAAGLKGERGLPGVPGKAGPAGPKGSTGAQGEKGARGEKGESGQL) form the Collagen-like domain. Positions 64 to 113 (GETGAAGLKGERGLPGVPGKAGPAGPKGSTGAQGEKGARGEKGESGQLHS) are disordered. Positions 77–90 (LPGVPGKAGPAGPK) are enriched in low complexity. The Fibrinogen C-terminal domain occupies 112–329 (HSCATGPRTC…KVSEMKLRLT (218 aa)). 2 disulfide bridges follow: cysteine 114/cysteine 142 and cysteine 121/cysteine 149. Positions 265, 267, 269, and 271 each coordinate Ca(2+). Cysteines 273 and 286 form a disulfide. An N-linked (GlcNAc...) asparagine glycan is attached at asparagine 316.

It belongs to the ficolin lectin family. As to quaternary structure, homotrimer. Interacts with elastin. Interacts with MASP1 and MASP2.

The protein resides in the secreted. Functionally, may function in innate immunity through activation of the lectin complement pathway. Calcium-dependent and GlcNAc-binding lectin. In Bos taurus (Bovine), this protein is Ficolin-2 (FCN2).